A 382-amino-acid polypeptide reads, in one-letter code: Galactokinase (382 aa).

Substrate is bound at residue Glu-34–Asp-37. Residue Gly-124 to Ser-130 participates in ATP binding. 2 residues coordinate Mg(2+): Ser-130 and Glu-162. Residue Asp-174 is the Proton acceptor of the active site. Tyr-223 contacts substrate.

It belongs to the GHMP kinase family. GalK subfamily.

The protein resides in the cytoplasm. It carries out the reaction alpha-D-galactose + ATP = alpha-D-galactose 1-phosphate + ADP + H(+). Its pathway is carbohydrate metabolism; galactose metabolism. Its function is as follows. Catalyzes the transfer of the gamma-phosphate of ATP to D-galactose to form alpha-D-galactose-1-phosphate (Gal-1-P). In Salmonella typhi, this protein is Galactokinase.